A 194-amino-acid polypeptide reads, in one-letter code: Cysteine and glycine-rich protein 3 (194 aa).

The segment at 1 to 5 (MPNWG) is interaction with TCAP. The LIM zinc-binding 1 domain occupies 10-61 (CGACEKTVYHAEEIQCNGRSFHKTCFHCMACRKALDSTTVAAHESEIYCKVC). The Nuclear localization signal signature appears at 64–69 (RRYGPK). Positions 94–106 (QSPKQARSATTSS) are interaction with CLF2. Phosphoserine is present on residues serine 95 and serine 153. An LIM zinc-binding 2 domain is found at 120 to 171 (CPRCGKSVYAAEKVMGGGKPWHKTCFRCAICGKSLESTNVTDKDGELYCKVC).

In terms of assembly, self-associates. Oligomeric in the cytoplasm and monomeric in the nucleus. Homooligomers preferentially form along the actin cytoskeleton. Interacts with TCAP, LDHD, MYOD1, MYOG, ACTN2, NRAP, MYF6. Interacts (via N-terminus) with GLRX3 (via C-terminus) and PPP3CA; GLRX3 and calcineurin compete for interaction with CSRP3. Interacts with CFL2; the stoichiometry influences F-actin depolymerization and possibly two molecules of CFL2 can interact with one molecule of CSRP3 resulting in the highest functional impact; the interaction is stronger with phosphorylated CFL2.

Its subcellular location is the nucleus. The protein localises to the cytoplasm. It localises to the cytoskeleton. The protein resides in the myofibril. It is found in the sarcomere. Its subcellular location is the z line. Positive regulator of myogenesis. Acts as a cofactor for myogenic bHLH transcription factors such as MYOD1, and probably MYOG and MYF6. Enhances the DNA-binding activity of the MYOD1:TCF3 isoform E47 complex and may promote formation of a functional MYOD1:TCF3 isoform E47:MEF2A complex involved in myogenesis. Plays a crucial and specific role in the organization of cytosolic structures in cardiomyocytes. Could play a role in mechanical stretch sensing. May be a scaffold protein that promotes the assembly of interacting proteins at Z-line structures. It is essential for calcineurin anchorage to the Z line. Required for stress-induced calcineurin-NFAT activation. The role in regulation of cytoskeleton dynamics by association with CFL2 is reported conflictingly. Proposed to contribute to the maintenance of muscle cell integrity through an actin-based mechanism. Can directly bind to actin filaments, cross-link actin filaments into bundles without polarity selectivity and protect them from dilution- and cofilin-mediated depolymerization; the function seems to involve its self-association. In vitro can inhibit PKC/PRKCA activity. Proposed to be involved in cardiac stress signaling by down-regulating excessive PKC/PRKCA signaling. The sequence is that of Cysteine and glycine-rich protein 3 (CSRP3) from Bos taurus (Bovine).